The sequence spans 186 residues: Small ribosomal subunit protein uS5 (186 aa).

The region spanning Phe20–Val83 is the S5 DRBM domain.

This sequence belongs to the universal ribosomal protein uS5 family. As to quaternary structure, part of the 30S ribosomal subunit. Contacts proteins S4 and S8.

Its function is as follows. With S4 and S12 plays an important role in translational accuracy. In terms of biological role, located at the back of the 30S subunit body where it stabilizes the conformation of the head with respect to the body. The protein is Small ribosomal subunit protein uS5 of Brucella anthropi (strain ATCC 49188 / DSM 6882 / CCUG 24695 / JCM 21032 / LMG 3331 / NBRC 15819 / NCTC 12168 / Alc 37) (Ochrobactrum anthropi).